Reading from the N-terminus, the 369-residue chain is Homoserine O-succinyltransferase (369 aa).

The disordered stretch occupies residues 1–21 (MVRIVPSARRTRAPAKLDGRS). Residues 86-350 (VVFVAGGISA…PFGHDAFLKE (265 aa)) form the AB hydrolase-1 domain. The tract at residues 92-95 (GISA) is important for substrate specificity. Catalysis depends on S172, which acts as the Nucleophile. Substrate is bound at residue R233. Residues D314 and H344 contribute to the active site. Residue D345 participates in substrate binding.

It belongs to the AB hydrolase superfamily. MetX family. Homodimer.

It localises to the cytoplasm. It carries out the reaction L-homoserine + succinyl-CoA = O-succinyl-L-homoserine + CoA. It functions in the pathway amino-acid biosynthesis; L-methionine biosynthesis via de novo pathway; O-succinyl-L-homoserine from L-homoserine: step 1/1. In terms of biological role, transfers a succinyl group from succinyl-CoA to L-homoserine, forming succinyl-L-homoserine. The sequence is that of Homoserine O-succinyltransferase from Xanthomonas campestris pv. campestris (strain ATCC 33913 / DSM 3586 / NCPPB 528 / LMG 568 / P 25).